The primary structure comprises 439 residues: Glutamate-1-semialdehyde 2,1-aminomutase (439 aa).

Residue K270 is modified to N6-(pyridoxal phosphate)lysine.

This sequence belongs to the class-III pyridoxal-phosphate-dependent aminotransferase family. HemL subfamily. As to quaternary structure, homodimer. Pyridoxal 5'-phosphate serves as cofactor.

It is found in the cytoplasm. The enzyme catalyses (S)-4-amino-5-oxopentanoate = 5-aminolevulinate. Its pathway is porphyrin-containing compound metabolism; protoporphyrin-IX biosynthesis; 5-aminolevulinate from L-glutamyl-tRNA(Glu): step 2/2. This Kocuria rhizophila (strain ATCC 9341 / DSM 348 / NBRC 103217 / DC2201) protein is Glutamate-1-semialdehyde 2,1-aminomutase.